Reading from the N-terminus, the 375-residue chain is Dual-specificity RNA methyltransferase RlmN (375 aa).

Glu94 acts as the Proton acceptor in catalysis. In terms of domain architecture, Radical SAM core spans 100–339 (EEDRATLCVS…VTVRKTRGDD (240 aa)). A disulfide bond links Cys107 and Cys344. Residues Cys114, Cys118, and Cys121 each contribute to the [4Fe-4S] cluster site. Residues 168-169 (GE), Ser200, 222-224 (SLH), and Asn301 contribute to the S-adenosyl-L-methionine site. Cys344 (S-methylcysteine intermediate) is an active-site residue.

Belongs to the radical SAM superfamily. RlmN family. The cofactor is [4Fe-4S] cluster.

It is found in the cytoplasm. It carries out the reaction adenosine(2503) in 23S rRNA + 2 reduced [2Fe-2S]-[ferredoxin] + 2 S-adenosyl-L-methionine = 2-methyladenosine(2503) in 23S rRNA + 5'-deoxyadenosine + L-methionine + 2 oxidized [2Fe-2S]-[ferredoxin] + S-adenosyl-L-homocysteine. The catalysed reaction is adenosine(37) in tRNA + 2 reduced [2Fe-2S]-[ferredoxin] + 2 S-adenosyl-L-methionine = 2-methyladenosine(37) in tRNA + 5'-deoxyadenosine + L-methionine + 2 oxidized [2Fe-2S]-[ferredoxin] + S-adenosyl-L-homocysteine. Its function is as follows. Specifically methylates position 2 of adenine 2503 in 23S rRNA and position 2 of adenine 37 in tRNAs. m2A2503 modification seems to play a crucial role in the proofreading step occurring at the peptidyl transferase center and thus would serve to optimize ribosomal fidelity. In Vibrio parahaemolyticus serotype O3:K6 (strain RIMD 2210633), this protein is Dual-specificity RNA methyltransferase RlmN.